The primary structure comprises 275 residues: NH(3)-dependent NAD(+) synthetase (275 aa).

ATP is bound at residue 50–57; the sequence is GISGGVDS. Aspartate 56 serves as a coordination point for Mg(2+). Arginine 147 provides a ligand contact to deamido-NAD(+). Threonine 167 is a binding site for ATP. Glutamate 172 contacts Mg(2+). Deamido-NAD(+) is bound by residues lysine 180 and aspartate 187. The ATP site is built by lysine 196 and threonine 218. 267–268 serves as a coordination point for deamido-NAD(+); it reads HK.

It belongs to the NAD synthetase family. Homodimer.

It catalyses the reaction deamido-NAD(+) + NH4(+) + ATP = AMP + diphosphate + NAD(+) + H(+). It participates in cofactor biosynthesis; NAD(+) biosynthesis; NAD(+) from deamido-NAD(+) (ammonia route): step 1/1. Its function is as follows. Catalyzes the ATP-dependent amidation of deamido-NAD to form NAD. Uses ammonia as a nitrogen source. This Pseudomonas aeruginosa (strain UCBPP-PA14) protein is NH(3)-dependent NAD(+) synthetase.